Reading from the N-terminus, the 206-residue chain is Large ribosomal subunit protein uL4 (206 aa).

The interval 45–75 (RQGTHSTKTRGEVRGGGRKPWRQKGTGRARQ) is disordered. Residues 60-71 (GGRKPWRQKGTG) are compositionally biased toward basic residues.

The protein belongs to the universal ribosomal protein uL4 family. In terms of assembly, part of the 50S ribosomal subunit.

In terms of biological role, one of the primary rRNA binding proteins, this protein initially binds near the 5'-end of the 23S rRNA. It is important during the early stages of 50S assembly. It makes multiple contacts with different domains of the 23S rRNA in the assembled 50S subunit and ribosome. Functionally, forms part of the polypeptide exit tunnel. The sequence is that of Large ribosomal subunit protein uL4 from Thermoanaerobacter pseudethanolicus (strain ATCC 33223 / 39E) (Clostridium thermohydrosulfuricum).